A 109-amino-acid chain; its full sequence is U-scoloptoxin(16)-Cw1a (109 aa).

A signal peptide spans 1–21 (MNAVFIVFLSAILSYPHESFA).

This sequence belongs to the scoloptoxin-16 family. In terms of processing, contains 4 disulfide bonds. As to expression, expressed by the venom gland.

It is found in the secreted. In Cormocephalus westwoodi (Westwood's green centipede), this protein is U-scoloptoxin(16)-Cw1a.